Reading from the N-terminus, the 402-residue chain is 2,3-bisphosphoglycerate-independent phosphoglycerate mutase (402 aa).

The disordered stretch occupies residues 155 to 174 (SMVSDSDPHRENERPMEVRP). The segment covering 160–174 (SDPHRENERPMEVRP) has biased composition (basic and acidic residues).

The protein belongs to the BPG-independent phosphoglycerate mutase family. A-PGAM subfamily.

The catalysed reaction is (2R)-2-phosphoglycerate = (2R)-3-phosphoglycerate. It participates in carbohydrate degradation; glycolysis; pyruvate from D-glyceraldehyde 3-phosphate: step 3/5. In terms of biological role, catalyzes the interconversion of 2-phosphoglycerate and 3-phosphoglycerate. This is 2,3-bisphosphoglycerate-independent phosphoglycerate mutase from Picrophilus torridus (strain ATCC 700027 / DSM 9790 / JCM 10055 / NBRC 100828 / KAW 2/3).